Reading from the N-terminus, the 497-residue chain is Arginine/ornithine antiporter ArcD2 (497 aa).

13 helical membrane passes run 8–28, 41–61, 88–108, 127–147, 160–180, 220–240, 255–275, 297–317, 354–374, 378–398, 406–426, 429–449, and 462–482; these read GISL…GGVF, GGVV…VLSF, FLSG…FAVL, SLTI…MLLV, IVMI…IILF, IKGS…ATMM, VIGL…PYGY, VGGW…LGAW, LLIT…VANA, FIYM…AYLF, SVKN…ALYL, WQYV…FIGA, and WLGM…LICG.

It belongs to the amino acid-polyamine-organocation (APC) superfamily. Basic amino acid/polyamine antiporter (APA) (TC 2.A.3.2) family.

It is found in the cell membrane. It carries out the reaction L-ornithine(in) + L-arginine(out) = L-ornithine(out) + L-arginine(in). In terms of biological role, catalyzes electroneutral exchange between L-arginine and L-ornithine. Can also efficiently translocate L-alanine. May function in vivo as a L-arginine/L-alanine exchanger in a pathway together with the arcT gene, which is found adjacent to the arcD2 gene in the ADI gene cluster. The sequence is that of Arginine/ornithine antiporter ArcD2 from Lactococcus lactis subsp. cremoris (strain MG1363).